Consider the following 326-residue polypeptide: Beta-ketoacyl-[acyl-carrier-protein] synthase III (326 aa).

Active-site residues include Cys-112 and His-251. The interval 252–256 (QANSR) is ACP-binding. Asn-281 is an active-site residue.

It belongs to the thiolase-like superfamily. FabH family. In terms of assembly, homodimer.

It is found in the cytoplasm. The enzyme catalyses malonyl-[ACP] + acetyl-CoA + H(+) = 3-oxobutanoyl-[ACP] + CO2 + CoA. The protein operates within lipid metabolism; fatty acid biosynthesis. Functionally, catalyzes the condensation reaction of fatty acid synthesis by the addition to an acyl acceptor of two carbons from malonyl-ACP. Catalyzes the first condensation reaction which initiates fatty acid synthesis and may therefore play a role in governing the total rate of fatty acid production. Possesses both acetoacetyl-ACP synthase and acetyl transacylase activities. Its substrate specificity determines the biosynthesis of branched-chain and/or straight-chain of fatty acids. The polypeptide is Beta-ketoacyl-[acyl-carrier-protein] synthase III (Clostridium botulinum (strain Langeland / NCTC 10281 / Type F)).